A 349-amino-acid chain; its full sequence is MILQEQELKWSLEKGKSNMTIKGITFIGGGSFGTALGIMLAKKGYNINIWDRKPHVIADINEKKENIKYLPNVVIPSNVKAYKGMKEALVGIKYVVISVPSHAIREICRNMKDYLKEDAIIISVAKGIEEHSGKRLSQIIKEELPKNPVVILSGPSHAEEVAQDIPTTVVVTSEDVKASLEVQNLFSTNKFRVYTNDDIIGVEIGGAVKNIIALAAGISDGIGYGDNTKAALMTRGINEIIRIGEKLGGQRETFWGLTGMGDMIVTCTSMHSRNRRAGLLIGKGLSMEEAIEEVGMVVEGIKACKAFYELKEKLKVSMPITDALYRVLFQGEDAKYCVYELMTRDKKDE.

S31, F32, R52, K53, and K126 together coordinate NADPH. Sn-glycerol 3-phosphate contacts are provided by K126, G154, and S156. Position 158 (A158) interacts with NADPH. 5 residues coordinate sn-glycerol 3-phosphate: K209, D262, S272, R273, and N274. K209 serves as the catalytic Proton acceptor. Position 273 (R273) interacts with NADPH. NADPH contacts are provided by V297 and E299.

It belongs to the NAD-dependent glycerol-3-phosphate dehydrogenase family.

It is found in the cytoplasm. It carries out the reaction sn-glycerol 3-phosphate + NAD(+) = dihydroxyacetone phosphate + NADH + H(+). The enzyme catalyses sn-glycerol 3-phosphate + NADP(+) = dihydroxyacetone phosphate + NADPH + H(+). Its pathway is membrane lipid metabolism; glycerophospholipid metabolism. Catalyzes the reduction of the glycolytic intermediate dihydroxyacetone phosphate (DHAP) to sn-glycerol 3-phosphate (G3P), the key precursor for phospholipid synthesis. This is Glycerol-3-phosphate dehydrogenase [NAD(P)+] from Clostridium tetani (strain Massachusetts / E88).